A 231-amino-acid chain; its full sequence is UPF0653 protein C607.02c (231 aa).

Disordered regions lie at residues Met-1–Asn-33, Tyr-47–Tyr-68, Ser-93–Glu-132, and Ile-147–Glu-178. The segment covering Ser-9–Asp-27 has biased composition (basic and acidic residues). Composition is skewed to basic residues over residues Lys-53–Asp-67 and Glu-109–Lys-119.

This sequence belongs to the UPF0653 family.

The protein localises to the nucleus. It localises to the nucleolus. The chain is UPF0653 protein C607.02c from Schizosaccharomyces pombe (strain 972 / ATCC 24843) (Fission yeast).